The chain runs to 233 residues: Ribose-5-phosphate isomerase A (233 aa).

Residues 31–34 (SGST), 87–90 (DGAD), and 100–103 (KGGG) contribute to the substrate site. The active-site Proton acceptor is Glu109. Position 127 (Lys127) interacts with substrate.

This sequence belongs to the ribose 5-phosphate isomerase family. As to quaternary structure, homodimer.

It catalyses the reaction aldehydo-D-ribose 5-phosphate = D-ribulose 5-phosphate. It participates in carbohydrate degradation; pentose phosphate pathway; D-ribose 5-phosphate from D-ribulose 5-phosphate (non-oxidative stage): step 1/1. Catalyzes the reversible conversion of ribose-5-phosphate to ribulose 5-phosphate. The polypeptide is Ribose-5-phosphate isomerase A (Chlamydia caviae (strain ATCC VR-813 / DSM 19441 / 03DC25 / GPIC) (Chlamydophila caviae)).